We begin with the raw amino-acid sequence, 138 residues long: Large ribosomal subunit protein uL16 (138 aa).

Residues 1–16 (MLIPRRVKHRKQHHPG) are compositionally biased toward basic residues. The disordered stretch occupies residues 1 to 25 (MLIPRRVKHRKQHHPGRSGQATGGT).

It belongs to the universal ribosomal protein uL16 family. In terms of assembly, part of the 50S ribosomal subunit.

Its function is as follows. Binds 23S rRNA and is also seen to make contacts with the A and possibly P site tRNAs. In Renibacterium salmoninarum (strain ATCC 33209 / DSM 20767 / JCM 11484 / NBRC 15589 / NCIMB 2235), this protein is Large ribosomal subunit protein uL16.